We begin with the raw amino-acid sequence, 229 residues long: MNPTRYARICEMLARRQPDLTVCMEQVHKPHNVSAIIRTADAVGVHEVHAVWPGSRMRTMASAAAGSNSWVQVKTHRTIGDAVAHLKGQGMQILATHLSDNAVDFREIDYTRPTCILMGQEKTGITQEALALADQDIIIPMIGMVQSLNVSVASALILYEAQRQRQNAGMYLRENSMLPEAEQQRLLFEGGYPVLAKVAKRKGLPYPHVNQQGEIEADADWWATMQAAG.

Thr96, Ile139, and Leu148 together coordinate S-adenosyl-L-methionine.

The protein belongs to the class IV-like SAM-binding methyltransferase superfamily. RNA methyltransferase TrmH family.

It carries out the reaction guanosine(18) in tRNA + S-adenosyl-L-methionine = 2'-O-methylguanosine(18) in tRNA + S-adenosyl-L-homocysteine + H(+). Catalyzes the 2'-O methylation of guanosine at position 18 in tRNA. The polypeptide is tRNA (guanosine(18)-2'-O)-methyltransferase (Escherichia coli O157:H7).